The chain runs to 69 residues: Intrepicalcin (69 aa).

Positions 1–27 are cleaved as a signal peptide; that stretch reads MRQNTMTIIFIVFIVTFASLTIYGAEA. The propeptide occupies 28–36; it reads SEANFLERR. 3 disulfides stabilise this stretch: C39/C53, C46/C57, and C52/C68. Residues 59-60 are essential for stimulation of [3H]ryanodine binding to RYR1; sequence RR.

This sequence belongs to the scorpion calcin family. As to expression, expressed by the venom gland.

Its subcellular location is the secreted. In terms of biological role, this toxin stabilizes ryanodine receptor 1 (RyR1) opening in a long-lasting subconductance state (55% of the full conductance state). Furthermore, it triggers calcium release from sarcoplasmic vesicles (45.3 nM are enough to induce a sharp release, and 50% of the total calcium is released after toxin (100 nM) addition) probably by acting as a cell-penetrating peptide (CPP). In addition, it has been shown to dose-dependently stimulate ryanodine binding to RyR1 (EC(50)=17.4 nM). It also augments the bell-shaped calcium-[3H]ryanodine binding curve that is maximal at about 10 uM calcium concentration. It binds a different site as ryanodine. It acts synergistically with caffeine. In vivo, intracerebroventricular injection into mice induces neurotoxic symptoms, followed by death. In Thorellius intrepidus (Scorpion), this protein is Intrepicalcin.